Here is a 367-residue protein sequence, read N- to C-terminus: Adenosine deaminase (367 aa).

His46 and His48 together coordinate Zn(2+). Residues 48 to 50, Asp176, and Gly205 each bind a purine D-ribonucleoside; that span reads HLD. The segment at 174-188 is gating helix loop; regulates binding affinity for substrates and thus substrate selectivity; that stretch reads TGDGGLSHERMKEAA. A Zn(2+)-binding site is contributed by His230. Glu233, His257, and Asp314 together coordinate a purine D-ribonucleoside. Asp314 provides a ligand contact to Zn(2+).

It belongs to the metallo-dependent hydrolases superfamily. Adenosine and AMP deaminases family. Zn(2+) serves as cofactor.

It carries out the reaction adenosine + H2O + H(+) = inosine + NH4(+). The enzyme catalyses S-methyl-5'-thioadenosine + H2O + H(+) = S-methyl-5'-thioinosine + NH4(+). It functions in the pathway purine metabolism; purine nucleoside salvage. Its activity is regulated as follows. Inhibited by coformycin and methylthiocoformycin (MT-coformycin). Catalyzes the hydrolytic deamination of adenosine to produce inosine. Unlike mammalian adenosine deaminases, also catalyzes the deamination of 5'-methylthioadenosine (MTA), a by-product of polyamine biosynthesis, to produce 5'-methylthioinosine (MTI). Plays an essential role in the purine salvage pathway which allows the parasite to use host cell purines for the synthesis of nucleic acids. This is Adenosine deaminase from Plasmodium falciparum (isolate 3D7).